The primary structure comprises 462 residues: Proline--tRNA ligase (462 aa).

This sequence belongs to the class-II aminoacyl-tRNA synthetase family. ProS type 3 subfamily. As to quaternary structure, homodimer.

The protein localises to the cytoplasm. It catalyses the reaction tRNA(Pro) + L-proline + ATP = L-prolyl-tRNA(Pro) + AMP + diphosphate. In terms of biological role, catalyzes the attachment of proline to tRNA(Pro) in a two-step reaction: proline is first activated by ATP to form Pro-AMP and then transferred to the acceptor end of tRNA(Pro). The chain is Proline--tRNA ligase from Thermoplasma acidophilum (strain ATCC 25905 / DSM 1728 / JCM 9062 / NBRC 15155 / AMRC-C165).